We begin with the raw amino-acid sequence, 324 residues long: Beta-ketoacyl-[acyl-carrier-protein] synthase III (324 aa).

Residues Cys116 and His251 contribute to the active site. Positions 252–256 are ACP-binding; it reads QANLR. Residue Asn281 is part of the active site.

Belongs to the thiolase-like superfamily. FabH family. Homodimer.

Its subcellular location is the cytoplasm. It catalyses the reaction malonyl-[ACP] + acetyl-CoA + H(+) = 3-oxobutanoyl-[ACP] + CO2 + CoA. It functions in the pathway lipid metabolism; fatty acid biosynthesis. Functionally, catalyzes the condensation reaction of fatty acid synthesis by the addition to an acyl acceptor of two carbons from malonyl-ACP. Catalyzes the first condensation reaction which initiates fatty acid synthesis and may therefore play a role in governing the total rate of fatty acid production. Possesses both acetoacetyl-ACP synthase and acetyl transacylase activities. Its substrate specificity determines the biosynthesis of branched-chain and/or straight-chain of fatty acids. This Xylella fastidiosa (strain 9a5c) protein is Beta-ketoacyl-[acyl-carrier-protein] synthase III.